Here is a 231-residue protein sequence, read N- to C-terminus: Probable septum site-determining protein MinC (231 aa).

Residues 102–125 (KEKAPRPAPAPQAPAQNTTPVTKT) are disordered.

The protein belongs to the MinC family. In terms of assembly, interacts with MinD and FtsZ.

In terms of biological role, cell division inhibitor that blocks the formation of polar Z ring septums. Rapidly oscillates between the poles of the cell to destabilize FtsZ filaments that have formed before they mature into polar Z rings. Prevents FtsZ polymerization. This is Probable septum site-determining protein MinC from Escherichia coli O139:H28 (strain E24377A / ETEC).